A 330-amino-acid polypeptide reads, in one-letter code: Putative aminopeptidase (330 aa).

Positions 65 and 168 each coordinate a divalent metal cation. The Proton acceptor role is filled by E198. The a divalent metal cation site is built by E199, D221, and H307.

The protein belongs to the peptidase M42 family. A divalent metal cation is required as a cofactor.

The protein is Putative aminopeptidase (celM) of Acetivibrio thermocellus (Hungateiclostridium thermocellum).